The chain runs to 326 residues: CRISPR-associated endonuclease Cas1 (326 aa).

Residues glutamate 191, histidine 255, and aspartate 269 each coordinate Mn(2+).

Belongs to the CRISPR-associated endonuclease Cas1 family. In terms of assembly, homodimer. Interacts with Cas3, in the absence of crRNA. It depends on Mg(2+) as a cofactor. Mn(2+) serves as cofactor.

Functionally, CRISPR (clustered regularly interspaced short palindromic repeat), is an adaptive immune system that provides protection against mobile genetic elements (viruses, transposable elements and conjugative plasmids). CRISPR clusters contain sequences complementary to antecedent mobile elements and target invading nucleic acids. CRISPR clusters are transcribed and processed into CRISPR RNA (crRNA). Acts as a dsDNA endonuclease. Involved in the integration of spacer DNA into the CRISPR cassette. The chain is CRISPR-associated endonuclease Cas1 from Pectobacterium atrosepticum (strain SCRI 1043 / ATCC BAA-672) (Erwinia carotovora subsp. atroseptica).